The following is a 456-amino-acid chain: Rap guanine nucleotide exchange factor-like 1 (456 aa).

One can recognise a Ras-GEF domain in the interval 218 to 454 (EPEDVANHLT…FELSYKLEAN (237 aa)).

In terms of biological role, probable guanine nucleotide exchange factor (GEF). This is Rap guanine nucleotide exchange factor-like 1 (RAPGEFL1) from Pongo pygmaeus (Bornean orangutan).